A 130-amino-acid polypeptide reads, in one-letter code: Small ribosomal subunit protein uS11c (130 aa).

The protein belongs to the universal ribosomal protein uS11 family. As to quaternary structure, part of the 30S ribosomal subunit.

Its subcellular location is the plastid. The protein localises to the chloroplast. The chain is Small ribosomal subunit protein uS11c from Pinus koraiensis (Korean pine).